Here is a 245-residue protein sequence, read N- to C-terminus: MSGHSKWATTKNHKFAQDAKRSKMFQKFSKEIIVAATLGGADPDSNPALKLAIAKAKAKSMPKANIEKAIAKVAGGSKDGANYVSYLYSGTAMGGVTFLISCLSDNFNRLSSNIKHYFTKHNGQLGKQGAIPYVFDQKGIIEIAKSDAAEDELMMVALEAGASDFFSEDDSFIIYSEPTNFQVLKQTLDDNFKIENYLTAEVTYIANTEVDVDKAKLEQIEAFVSLLEDDDDIQEVYHNAYCEDN.

It belongs to the TACO1 family.

Its subcellular location is the cytoplasm. The chain is Probable transcriptional regulatory protein MARTH_orf271 from Metamycoplasma arthritidis (strain 158L3-1) (Mycoplasma arthritidis).